Reading from the N-terminus, the 660-residue chain is MTEENKSFYITTPIYYPSGKLHIGHAYTTVAGDAMARYKRMQGYNVHYLTGTDEHGQKIQKKAEELNITPQAYVDNIVAGIKELWEKMNISYDDFIRTTEDRHKDVVEKIFKQLVDQGDIYLDEYEGWYSVQDETFYTEHQLVDPIMEGDKVVGGKSPDSGHDVELVREESYFFRMGKYVDRLLKFYEDNPHFIQPESRKNEMINNFIKPGLEDLAVSRTSFDWGVRVPGNPKHVIYVWVDALSNYITALGYGTANEEKYKKFWPADVHLVGKEIVRFHTIYWPIILMALDLPLPKKVFAHGWILMKDGKMSKSKGNVVDPVTLIDRYGLDALRYYLLREVPFGSDGVFTPEGFVERINFDLANDLGNLLNRTVAMIDKYFSGEIPAFKANVTEFDETLVAFAQDTLKKVEEAMENMEFSVALGSIWQLVSRTNKYIDETQPWVLAKDENDREKLASVMAHLAEVLRQTGIMLMPFLTVAPSKMFAQLGLTDEAHKSWESLSTIGCIPAGTKVEKGNPIFPRLEMEVEVEYIKEQMKSSAPKVEEKKEEEPKAEEITIDDFFKVELRVAEVLSAEPVKKADKLLKIQLDLGTEKRQVVSGIAKFYSPEDLKGKKVICVTNLKPVKLRGELSQGMILAGEENGVLSLASIDQNLPNGTKIK.

A 'HIGH' region motif is present at residues tyrosine 15–histidine 25. Residues lysine 310–serine 314 carry the 'KMSKS' region motif. Lysine 313 lines the ATP pocket. A tRNA-binding domain is found at aspartate 560 to lysine 660.

Belongs to the class-I aminoacyl-tRNA synthetase family. MetG type 2B subfamily. In terms of assembly, homodimer.

The protein localises to the cytoplasm. It catalyses the reaction tRNA(Met) + L-methionine + ATP = L-methionyl-tRNA(Met) + AMP + diphosphate. In terms of biological role, is required not only for elongation of protein synthesis but also for the initiation of all mRNA translation through initiator tRNA(fMet) aminoacylation. This is Methionine--tRNA ligase 1 from Bacillus cereus (strain ATCC 14579 / DSM 31 / CCUG 7414 / JCM 2152 / NBRC 15305 / NCIMB 9373 / NCTC 2599 / NRRL B-3711).